Consider the following 155-residue polypeptide: uncharacterized protein (155 aa).

Belongs to the IIV-6 145L family.

This is an uncharacterized protein from Acheta domesticus (House cricket).